The primary structure comprises 431 residues: Adenylosuccinate synthetase (431 aa).

Residues 13-19 and 41-43 each bind GTP; these read GDEGKGK and GHT. Aspartate 14 serves as the catalytic Proton acceptor. Mg(2+) is bound by residues aspartate 14 and glycine 41. IMP-binding positions include 14–17, 39–42, threonine 130, arginine 144, glutamine 225, threonine 240, and arginine 304; these read DEGK and NAGH. Histidine 42 acts as the Proton donor in catalysis. A substrate-binding site is contributed by 300 to 306; the sequence is ATTGRAR. Residues arginine 306, 332–334, and 414–416 contribute to the GTP site; these read KLD and STG.

Belongs to the adenylosuccinate synthetase family. Homodimer. Mg(2+) serves as cofactor.

It is found in the cytoplasm. It carries out the reaction IMP + L-aspartate + GTP = N(6)-(1,2-dicarboxyethyl)-AMP + GDP + phosphate + 2 H(+). The protein operates within purine metabolism; AMP biosynthesis via de novo pathway; AMP from IMP: step 1/2. Functionally, plays an important role in the de novo pathway of purine nucleotide biosynthesis. Catalyzes the first committed step in the biosynthesis of AMP from IMP. In Chromohalobacter salexigens (strain ATCC BAA-138 / DSM 3043 / CIP 106854 / NCIMB 13768 / 1H11), this protein is Adenylosuccinate synthetase.